The following is a 307-amino-acid chain: Lipoyl synthase (307 aa).

Residues C55, C60, C66, C81, C85, C88, and S292 each contribute to the [4Fe-4S] cluster site. One can recognise a Radical SAM core domain in the interval 67–281 (WEDREATFLI…ARHAEELGFS (215 aa)).

It belongs to the radical SAM superfamily. Lipoyl synthase family. [4Fe-4S] cluster is required as a cofactor.

It localises to the cytoplasm. The catalysed reaction is [[Fe-S] cluster scaffold protein carrying a second [4Fe-4S](2+) cluster] + N(6)-octanoyl-L-lysyl-[protein] + 2 oxidized [2Fe-2S]-[ferredoxin] + 2 S-adenosyl-L-methionine + 4 H(+) = [[Fe-S] cluster scaffold protein] + N(6)-[(R)-dihydrolipoyl]-L-lysyl-[protein] + 4 Fe(3+) + 2 hydrogen sulfide + 2 5'-deoxyadenosine + 2 L-methionine + 2 reduced [2Fe-2S]-[ferredoxin]. It functions in the pathway protein modification; protein lipoylation via endogenous pathway; protein N(6)-(lipoyl)lysine from octanoyl-[acyl-carrier-protein]: step 2/2. Its function is as follows. Catalyzes the radical-mediated insertion of two sulfur atoms into the C-6 and C-8 positions of the octanoyl moiety bound to the lipoyl domains of lipoate-dependent enzymes, thereby converting the octanoylated domains into lipoylated derivatives. The polypeptide is Lipoyl synthase (Mycobacterium avium (strain 104)).